The chain runs to 406 residues: Cholinephosphotransferase 1 (406 aa).

The residue at position 2 (Ala-2) is an N-acetylalanine. At 2-62 the chain is on the cytoplasmic side; it reads AAGAGARPAP…LLQWIPLWMA (61 aa). The helical transmembrane segment at 63–83 threads the bilayer; sequence PNSITLLGLAINMLTTLVLIS. Asn-64 serves as a coordination point for CDP-choline. Over 84–93 the chain is Lumenal; that stretch reads YCPTVTEEAP. Residues 94–118 form a helical membrane-spanning segment; it reads YWTYLLCALGLFIYQSLDAIDGKQA. Mg(2+) is bound by residues Asp-111 and Asp-114. Arg-119 is a CDP-choline binding site. The Cytoplasmic portion of the chain corresponds to 119–125; that stretch reads RRTNSCS. A helical transmembrane segment spans residues 126 to 150; that stretch reads PLGELFDHGCDSLSTVFMAVGASIA. Asp-132 contacts Mg(2+). Residue His-133 is the Proton acceptor of the active site. Asp-136 provides a ligand contact to Mg(2+). Residues 151–160 are Lumenal-facing; sequence VRLGTHPDWL. The helical transmembrane segment at 161 to 179 threads the bilayer; that stretch reads FFCSFIGMFMFYCAHWQTY. The Cytoplasmic segment spans residues 180–190; it reads VSGVLRFGKVD. Residues 191 to 207 form a helical membrane-spanning segment; sequence VTEIQIALVIVFVLSTF. At 208 to 222 the chain is on the lumenal side; it reads GGATMWDYTIPILEI. Residues 223 to 248 form a helical membrane-spanning segment; that stretch reads KLKILPVLGVVGGAIFSCSNYFHVIL. At 249 to 265 the chain is on the cytoplasmic side; that stretch reads HGGVGKNGSTIAGTSVL. A helical transmembrane segment spans residues 266 to 281; that stretch reads SPGLHIGIIIILAIMI. Topologically, residues 282-293 are lumenal; that stretch reads YKKSATNLFEKH. A helical transmembrane segment spans residues 294–316; the sequence is PCLYTLMFGCVFAKVSQKLVIAH. The Cytoplasmic portion of the chain corresponds to 317–329; the sequence is MTKSELYLQDTVF. Residues 330–339 traverse the membrane as a helical segment; the sequence is IGPGLLFLDQ. Topologically, residues 340–346 are lumenal; that stretch reads YFNNFVD. Residues 347–376 form a helical membrane-spanning segment; the sequence is EYIVLWIAMVISSLDMMRYFSALCLQISRH. The Cytoplasmic portion of the chain corresponds to 377–406; it reads LHLSIFKTSCHQAPEQVQVLPPKSHQNNMD.

The protein belongs to the CDP-alcohol phosphatidyltransferase class-I family. Requires Mg(2+) as cofactor. Mn(2+) is required as a cofactor.

It localises to the golgi apparatus membrane. The enzyme catalyses CDP-choline + a 1,2-diacyl-sn-glycerol = a 1,2-diacyl-sn-glycero-3-phosphocholine + CMP + H(+). It carries out the reaction 1-octadecanoyl-2-(5Z,8Z,11Z,14Z-eicosatetraenoyl)-sn-glycerol + CDP-choline = 1-octadecanoyl-2-(5Z,8Z,11Z,14Z-eicosatetraenoyl)-sn-glycero-3-phosphocholine + CMP + H(+). The catalysed reaction is 1-hexadecanoyl-2-(9Z-octadecenoyl)-sn-glycerol + CDP-choline = 1-hexadecanoyl-2-(9Z-octadecenoyl)-sn-glycero-3-phosphocholine + CMP + H(+). It catalyses the reaction 1-hexadecanoyl-2-(4Z,7Z,10Z,13Z,16Z,19Z-docosahexaenoyl)-sn-glycerol + CDP-choline = 1-hexadecanoyl-2-(4Z,7Z,10Z,13Z,16Z,19Z-docosahexaenoyl)-sn-glycero-3-phosphocholine + CMP + H(+). The enzyme catalyses 1,2-dioctanoyl-sn-glycerol + CDP-choline = 1,2-dioctanoyl-sn-glycero-3-phosphocholine + CMP + H(+). Its pathway is phospholipid metabolism; phosphatidylcholine biosynthesis; phosphatidylcholine from phosphocholine: step 2/2. Its function is as follows. Catalyzes the final step of de novo phosphatidylcholine (PC) synthesis, i.e. the transfer of choline phosphate from CDP-choline to the free hydroxyl of a diacylglycerol (DAG), producing a PC. It thereby plays a central role in the formation and maintenance of vesicular membranes. This Bos taurus (Bovine) protein is Cholinephosphotransferase 1 (CHPT1).